The sequence spans 182 residues: uncharacterized protein (182 aa).

The N-terminal stretch at methionine 1–glycine 26 is a signal peptide. The disordered stretch occupies residues tyrosine 68–threonine 90. The span at proline 74–threonine 90 shows a compositional bias: low complexity.

This is an uncharacterized protein from Dryophytes versicolor (chameleon treefrog).